The sequence spans 417 residues: GTP-binding protein YPT11 (417 aa).

Positions 1 to 34 are disordered; the sequence is MSQRKRYSLNVVTSPSIPSPTPSAPIRTNESNWE. GTP-binding positions include 97–104, 228–232, and 292–295; these read GDANVGKT, DTAGQ, and NKID. Residues Cys415 and Cys416 are each lipidated (S-geranylgeranyl cysteine).

This sequence belongs to the small GTPase superfamily. Rab family. As to quaternary structure, interacts with MYO2 (via C-terminal tail domain). Interacts with YIF1, YIP3, YIP4 and YIP5.

It localises to the endoplasmic reticulum membrane. Its subcellular location is the bud tip. The protein localises to the bud neck. In terms of biological role, involved in the positive control of both endoplasmic reticulum (ER) and mitochondrion inheritance during cell divison. Required for the MYO2-dependent retention of newly inherited mitochondria at the bud tip in developing daughter cells. The chain is GTP-binding protein YPT11 (YPT11) from Saccharomyces cerevisiae (strain YJM789) (Baker's yeast).